The following is a 1096-amino-acid chain: Carbamoyl phosphate synthase large chain (1096 aa).

The interval M1 to E402 is carboxyphosphate synthetic domain. 12 residues coordinate ATP: R129, R169, G175, G176, E208, I210, E215, G241, V242, H243, Q285, and E299. In terms of domain architecture, ATP-grasp 1 spans K133–I328. The Mg(2+) site is built by Q285, E299, and N301. Mn(2+) is bound by residues Q285, E299, and N301. The oligomerization domain stretch occupies residues K403–I547. Residues V548–F950 form a carbamoyl phosphate synthetic domain region. The 195-residue stretch at S676 to V870 folds into the ATP-grasp 2 domain. ATP is bound by residues R712, R754, L756, E761, G786, I787, H788, S789, Q829, and E841. Residues Q829, E841, and N843 each coordinate Mg(2+). Residues Q829, E841, and N843 each coordinate Mn(2+). The 145-residue stretch at G951–R1095 folds into the MGS-like domain. An allosteric domain region spans residues G951–R1096.

The protein belongs to the CarB family. Composed of two chains; the small (or glutamine) chain promotes the hydrolysis of glutamine to ammonia, which is used by the large (or ammonia) chain to synthesize carbamoyl phosphate. Tetramer of heterodimers (alpha,beta)4. Requires Mg(2+) as cofactor. The cofactor is Mn(2+).

The catalysed reaction is hydrogencarbonate + L-glutamine + 2 ATP + H2O = carbamoyl phosphate + L-glutamate + 2 ADP + phosphate + 2 H(+). It catalyses the reaction hydrogencarbonate + NH4(+) + 2 ATP = carbamoyl phosphate + 2 ADP + phosphate + 2 H(+). Its pathway is amino-acid biosynthesis; L-arginine biosynthesis; carbamoyl phosphate from bicarbonate: step 1/1. It functions in the pathway pyrimidine metabolism; UMP biosynthesis via de novo pathway; (S)-dihydroorotate from bicarbonate: step 1/3. Its function is as follows. Large subunit of the glutamine-dependent carbamoyl phosphate synthetase (CPSase). CPSase catalyzes the formation of carbamoyl phosphate from the ammonia moiety of glutamine, carbonate, and phosphate donated by ATP, constituting the first step of 2 biosynthetic pathways, one leading to arginine and/or urea and the other to pyrimidine nucleotides. The large subunit (synthetase) binds the substrates ammonia (free or transferred from glutamine from the small subunit), hydrogencarbonate and ATP and carries out an ATP-coupled ligase reaction, activating hydrogencarbonate by forming carboxy phosphate which reacts with ammonia to form carbamoyl phosphate. The polypeptide is Carbamoyl phosphate synthase large chain (Clavibacter sepedonicus (Clavibacter michiganensis subsp. sepedonicus)).